The sequence spans 356 residues: MPRPLSATIHTSALANNLAVARRYAPKSKIWAVVKANAYGHGLARVFPGLRATDGFGLLDLEEAVKLRELGWAGPILLLEGFFRPTDIDVIDRYSLTTALHSDEQLRMLEMARLSKPVNIQLKMNTGMNRLGYTPEKFRAAWERARAAQGVGQITLMTHFSDADGDRGVDYQVQAFERGAQGIAGARSLANSAATLWHPATHFDWVRPGIIMYGASPSGVTAAIEGTGLQPAMTLASELIAVQTLSEGHTVGYGSSFKARGSMRIGVVACGYADGYPRVAPEGTPVIVDGVRTRVVGRVSMDMLTVDLTPVPTANVGSRVELWGTSLPIDDVAQACGTIGYELMCAVAPRVPVRAE.

The Proton acceptor; specific for D-alanine role is filled by Lys-35. Lys-35 is modified (N6-(pyridoxal phosphate)lysine). Substrate is bound at residue Arg-130. The Proton acceptor; specific for L-alanine role is filled by Tyr-253. A substrate-binding site is contributed by Met-301.

The protein belongs to the alanine racemase family. Pyridoxal 5'-phosphate is required as a cofactor.

The catalysed reaction is L-alanine = D-alanine. It functions in the pathway amino-acid biosynthesis; D-alanine biosynthesis; D-alanine from L-alanine: step 1/1. Functionally, catalyzes the interconversion of L-alanine and D-alanine. May also act on other amino acids. In Paraburkholderia phytofirmans (strain DSM 17436 / LMG 22146 / PsJN) (Burkholderia phytofirmans), this protein is Alanine racemase (alr).